The following is a 221-amino-acid chain: NAD(P)H-hydrate epimerase (221 aa).

In terms of domain architecture, YjeF N-terminal spans 9-219; that stretch reads MRELETAAVK…NIGLPKELLS (211 aa). 60 to 64 contacts (6S)-NADPHX; that stretch reads GNGGD. Residues Asn-61 and Asp-131 each coordinate K(+). (6S)-NADPHX contacts are provided by residues 135–141, Tyr-146, and Asp-164; that span reads GIGFKGE. Ser-167 serves as a coordination point for K(+).

The protein belongs to the NnrE/AIBP family. It depends on K(+) as a cofactor.

The catalysed reaction is (6R)-NADHX = (6S)-NADHX. The enzyme catalyses (6R)-NADPHX = (6S)-NADPHX. Catalyzes the epimerization of the S- and R-forms of NAD(P)HX, a damaged form of NAD(P)H that is a result of enzymatic or heat-dependent hydration. This is a prerequisite for the S-specific NAD(P)H-hydrate dehydratase to allow the repair of both epimers of NAD(P)HX. This Elusimicrobium minutum (strain Pei191) protein is NAD(P)H-hydrate epimerase.